The following is a 378-amino-acid chain: SPbeta prophage-derived uncharacterized protein YorJ (378 aa).

This is SPbeta prophage-derived uncharacterized protein YorJ (yorJ) from Bacillus subtilis (strain 168).